The primary structure comprises 921 residues: Isoleucine--tRNA ligase (921 aa).

Positions 57–67 match the 'HIGH' region motif; the sequence is PYANGELHMGH. Glu-552 provides a ligand contact to L-isoleucyl-5'-AMP. Residues 593-597 carry the 'KMSKS' region motif; it reads KMSKS. Position 596 (Lys-596) interacts with ATP. Zn(2+)-binding residues include Cys-888, Cys-891, Cys-908, and Cys-911.

The protein belongs to the class-I aminoacyl-tRNA synthetase family. IleS type 1 subfamily. Monomer. Zn(2+) serves as cofactor.

It localises to the cytoplasm. It carries out the reaction tRNA(Ile) + L-isoleucine + ATP = L-isoleucyl-tRNA(Ile) + AMP + diphosphate. In terms of biological role, catalyzes the attachment of isoleucine to tRNA(Ile). As IleRS can inadvertently accommodate and process structurally similar amino acids such as valine, to avoid such errors it has two additional distinct tRNA(Ile)-dependent editing activities. One activity is designated as 'pretransfer' editing and involves the hydrolysis of activated Val-AMP. The other activity is designated 'posttransfer' editing and involves deacylation of mischarged Val-tRNA(Ile). The chain is Isoleucine--tRNA ligase from Listeria monocytogenes serotype 4b (strain F2365).